We begin with the raw amino-acid sequence, 149 residues long: Ribonuclease HI (149 aa).

Positions 1 to 140 constitute an RNase H type-1 domain; that stretch reads MIIGYFDGLC…AYELVRRGKL (140 aa). 4 residues coordinate Mg(2+): D7, E52, D76, and D125. 4 residues coordinate Mn(2+): D7, E52, D76, and D125. A disulfide bridge links C58 with C145.

In terms of assembly, monomer. It depends on Mn(2+) as a cofactor. Mg(2+) is required as a cofactor. Co(2+) serves as cofactor. Requires Ni(2+) as cofactor. The disulfide bond confers considerable stability to the protein.

It localises to the cytoplasm. The catalysed reaction is Endonucleolytic cleavage to 5'-phosphomonoester.. Nuclease that specifically degrades the RNA of RNA-DNA hybrids. Endonucleolytically removes RNA primers from the Okazaki fragments of lagging strand synthesis on its own. In the presence of Mn(2+) or Co(2+) can also cleave an RNA-RNA hybrid; the dsRNase activity is 10- 100-fold lower than RNase H activity. Complements the temperature-sensitive phenotype of an E.coli double rnhA/rnhB (RNase H) disruption mutant. The protein is Ribonuclease HI (rnhA) of Sulfurisphaera tokodaii (strain DSM 16993 / JCM 10545 / NBRC 100140 / 7) (Sulfolobus tokodaii).